Here is a 226-residue protein sequence, read N- to C-terminus: NEDD8-specific protease 1 (226 aa).

It belongs to the peptidase C48 family.

Its function is as follows. Processes the pre-form of the ubiquitin-like protein NEDD8/RUB1. Has the capacity to discriminate between NEDD8/RUB1 and ubiquitin. Has no SUMO protease activity. This is NEDD8-specific protease 1 (NEDP1) from Arabidopsis thaliana (Mouse-ear cress).